The following is a 78-amino-acid chain: uncharacterized protein (78 aa).

The disordered stretch occupies residues 49–78 (QRASLERSNSIRNLQSQGKRRSDSKESRKL). Over residues 54–65 (ERSNSIRNLQSQ) the composition is skewed to polar residues. Positions 68-78 (RRSDSKESRKL) are enriched in basic and acidic residues.

This is an uncharacterized protein from Saccharomyces cerevisiae (strain ATCC 204508 / S288c) (Baker's yeast).